A 321-amino-acid polypeptide reads, in one-letter code: Beta-ketoacyl-[acyl-carrier-protein] synthase III (321 aa).

Residues C115 and H248 contribute to the active site. Residues 249-253 (QANIR) form an ACP-binding region. N278 is an active-site residue.

This sequence belongs to the thiolase-like superfamily. FabH family. As to quaternary structure, homodimer.

The protein resides in the cytoplasm. It carries out the reaction malonyl-[ACP] + acetyl-CoA + H(+) = 3-oxobutanoyl-[ACP] + CO2 + CoA. Its pathway is lipid metabolism; fatty acid biosynthesis. Functionally, catalyzes the condensation reaction of fatty acid synthesis by the addition to an acyl acceptor of two carbons from malonyl-ACP. Catalyzes the first condensation reaction which initiates fatty acid synthesis and may therefore play a role in governing the total rate of fatty acid production. Possesses both acetoacetyl-ACP synthase and acetyl transacylase activities. Its substrate specificity determines the biosynthesis of branched-chain and/or straight-chain of fatty acids. This is Beta-ketoacyl-[acyl-carrier-protein] synthase III from Aromatoleum aromaticum (strain DSM 19018 / LMG 30748 / EbN1) (Azoarcus sp. (strain EbN1)).